A 273-amino-acid polypeptide reads, in one-letter code: Light-independent protochlorophyllide reductase iron-sulfur ATP-binding protein (273 aa).

ATP-binding positions include 12–17 and Lys41; that span reads GIGKST. Ser16 serves as a coordination point for Mg(2+). [4Fe-4S] cluster is bound by residues Cys97 and Cys131. Residue 182–183 participates in ATP binding; the sequence is NR.

Belongs to the NifH/BchL/ChlL family. Homodimer. Protochlorophyllide reductase is composed of three subunits; BchL, BchN and BchB. Requires [4Fe-4S] cluster as cofactor.

The catalysed reaction is chlorophyllide a + oxidized 2[4Fe-4S]-[ferredoxin] + 2 ADP + 2 phosphate = protochlorophyllide a + reduced 2[4Fe-4S]-[ferredoxin] + 2 ATP + 2 H2O. The protein operates within porphyrin-containing compound metabolism; bacteriochlorophyll biosynthesis (light-independent). Its function is as follows. Component of the dark-operative protochlorophyllide reductase (DPOR) that uses Mg-ATP and reduced ferredoxin to reduce ring D of protochlorophyllide (Pchlide) to form chlorophyllide a (Chlide). This reaction is light-independent. The L component serves as a unique electron donor to the NB-component of the complex, and binds Mg-ATP. This Chloroflexus aurantiacus (strain ATCC 29364 / DSM 637 / Y-400-fl) protein is Light-independent protochlorophyllide reductase iron-sulfur ATP-binding protein.